The following is a 203-amino-acid chain: Urease accessory protein UreG (203 aa).

14 to 21 (GPVGSGKT) serves as a coordination point for GTP.

The protein belongs to the SIMIBI class G3E GTPase family. UreG subfamily. Homodimer. UreD, UreF and UreG form a complex that acts as a GTP-hydrolysis-dependent molecular chaperone, activating the urease apoprotein by helping to assemble the nickel containing metallocenter of UreC. The UreE protein probably delivers the nickel.

Its subcellular location is the cytoplasm. Facilitates the functional incorporation of the urease nickel metallocenter. This process requires GTP hydrolysis, probably effectuated by UreG. This Rhizobium etli (strain CIAT 652) protein is Urease accessory protein UreG.